The chain runs to 451 residues: AAA-ATPase At3g50940 (451 aa).

The signal sequence occupies residues 1 to 25; sequence MSSSSESHLATAKTALTAVASVAAA. 254–261 is a binding site for ATP; it reads GPPGTGKS.

This sequence belongs to the AAA ATPase family. BCS1 subfamily. The cofactor is Mg(2+).

The enzyme catalyses ATP + H2O = ADP + phosphate + H(+). This is AAA-ATPase At3g50940 from Arabidopsis thaliana (Mouse-ear cress).